A 64-amino-acid chain; its full sequence is Conotoxin Leo-T1 (64 aa).

An N-terminal signal peptide occupies residues 1-22; it reads MRCLPVFIILLLLIPSAPSVDA. A propeptide spanning residues 23–48 is cleaved from the precursor; that stretch reads QPKTEDDVPLASLHDNAKLTLQGLWD.

The protein belongs to the conotoxin T superfamily. Contains 2 disulfide bonds that can be either 'C1-C3, C2-C4' or 'C1-C4, C2-C3', since these disulfide connectivities have been observed for conotoxins with cysteine framework V (for examples, see AC P0DQQ7 and AC P81755). Expressed by the venom duct.

The protein localises to the secreted. The protein is Conotoxin Leo-T1 of Conus leopardus (Leopard cone).